Reading from the N-terminus, the 460-residue chain is MALSAAIVLAAGEGTRMRSNKPKVLHAFAGKTFLNRVMDSVAALNPDTLAVVVHFQAERVAEAARSYDEQVTIVNQDDIPGTGRAVQCAMAQLTEAGKVDGPVLIAASDMPLLDSETLHRLVEFHTASGNGATVLTTILDDPTGYGRIIRDREGNVLRIVEQKDANRSELAVQEVNTSVYVFEASVLTEAIAGLKSNNAQGEFYLTDALETAKAAGKVGAFAAPDPLTVEGVNDRVQLAALSKTYNRRVCERWMRDGVTILDPETTWIEDDVQIGRDATILPGSFLQGHTVVGEDAIVGPYTTLIDATVDEGAVVERSRVQESHIGARTNIGPWTYLRPGNEFGEDAKAGAFVEMKKAHIGNGTKVPHLSYVGDAQLGDHTNIGGGTITANYDGVHKNRTTIGSGCHVGAGNLFVAPVEVGDNVTTGAGSVVRHAVPSDTMVYSENTQHNVEGWKPAWER.

Residues 1 to 235 (MALSAAIVLA…PLTVEGVNDR (235 aa)) form a pyrophosphorylase region. Residues 9–12 (LAAG), lysine 23, glutamine 76, and 81–82 (GT) contribute to the UDP-N-acetyl-alpha-D-glucosamine site. Aspartate 109 contacts Mg(2+). Positions 146, 161, 176, and 233 each coordinate UDP-N-acetyl-alpha-D-glucosamine. Asparagine 233 is a Mg(2+) binding site. Residues 236–256 (VQLAALSKTYNRRVCERWMRD) form a linker region. The interval 257–460 (GVTILDPETT…VEGWKPAWER (204 aa)) is N-acetyltransferase. Residues arginine 338 and lysine 356 each coordinate UDP-N-acetyl-alpha-D-glucosamine. Histidine 368 acts as the Proton acceptor in catalysis. UDP-N-acetyl-alpha-D-glucosamine is bound by residues tyrosine 371 and asparagine 382. Acetyl-CoA is bound by residues 391-392 (NY) and alanine 428.

The protein in the N-terminal section; belongs to the N-acetylglucosamine-1-phosphate uridyltransferase family. It in the C-terminal section; belongs to the transferase hexapeptide repeat family. As to quaternary structure, homotrimer. Mg(2+) serves as cofactor.

Its subcellular location is the cytoplasm. It catalyses the reaction alpha-D-glucosamine 1-phosphate + acetyl-CoA = N-acetyl-alpha-D-glucosamine 1-phosphate + CoA + H(+). The catalysed reaction is N-acetyl-alpha-D-glucosamine 1-phosphate + UTP + H(+) = UDP-N-acetyl-alpha-D-glucosamine + diphosphate. The protein operates within nucleotide-sugar biosynthesis; UDP-N-acetyl-alpha-D-glucosamine biosynthesis; N-acetyl-alpha-D-glucosamine 1-phosphate from alpha-D-glucosamine 6-phosphate (route II): step 2/2. Its pathway is nucleotide-sugar biosynthesis; UDP-N-acetyl-alpha-D-glucosamine biosynthesis; UDP-N-acetyl-alpha-D-glucosamine from N-acetyl-alpha-D-glucosamine 1-phosphate: step 1/1. It functions in the pathway bacterial outer membrane biogenesis; LPS lipid A biosynthesis. Catalyzes the last two sequential reactions in the de novo biosynthetic pathway for UDP-N-acetylglucosamine (UDP-GlcNAc). The C-terminal domain catalyzes the transfer of acetyl group from acetyl coenzyme A to glucosamine-1-phosphate (GlcN-1-P) to produce N-acetylglucosamine-1-phosphate (GlcNAc-1-P), which is converted into UDP-GlcNAc by the transfer of uridine 5-monophosphate (from uridine 5-triphosphate), a reaction catalyzed by the N-terminal domain. The sequence is that of Bifunctional protein GlmU from Bifidobacterium longum (strain NCC 2705).